The chain runs to 284 residues: Formamidopyrimidine-DNA glycosylase (284 aa).

Pro-2 (schiff-base intermediate with DNA) is an active-site residue. The active-site Proton donor is Glu-3. Lys-61 acts as the Proton donor; for beta-elimination activity in catalysis. DNA contacts are provided by His-95, Arg-115, and Arg-157. Residues 243–277 (AVYGRAGQPCRRCGTAIVREPFMNRSSFRCPACQP) form an FPG-type zinc finger. Arg-267 functions as the Proton donor; for delta-elimination activity in the catalytic mechanism.

It belongs to the FPG family. Monomer. Zn(2+) is required as a cofactor.

The catalysed reaction is Hydrolysis of DNA containing ring-opened 7-methylguanine residues, releasing 2,6-diamino-4-hydroxy-5-(N-methyl)formamidopyrimidine.. It carries out the reaction 2'-deoxyribonucleotide-(2'-deoxyribose 5'-phosphate)-2'-deoxyribonucleotide-DNA = a 3'-end 2'-deoxyribonucleotide-(2,3-dehydro-2,3-deoxyribose 5'-phosphate)-DNA + a 5'-end 5'-phospho-2'-deoxyribonucleoside-DNA + H(+). Functionally, involved in base excision repair of DNA damaged by oxidation or by mutagenic agents. Acts as a DNA glycosylase that recognizes and removes damaged bases. Has a preference for oxidized purines, such as 7,8-dihydro-8-oxoguanine (8-oxoG). Has AP (apurinic/apyrimidinic) lyase activity and introduces nicks in the DNA strand. Cleaves the DNA backbone by beta-delta elimination to generate a single-strand break at the site of the removed base with both 3'- and 5'-phosphates. This chain is Formamidopyrimidine-DNA glycosylase, found in Acidothermus cellulolyticus (strain ATCC 43068 / DSM 8971 / 11B).